The sequence spans 378 residues: Chaperone protein DnaJ (378 aa).

The J domain occupies 5–69 (DYYEVLGVSK…NKRANYDQFG (65 aa)). The CR-type zinc finger occupies 135–217 (GSEKEISIRK…CHGKGTENKN (83 aa)). Zn(2+) contacts are provided by Cys-148, Cys-151, Cys-165, Cys-168, Cys-191, Cys-194, Cys-205, and Cys-208. CXXCXGXG motif repeat units lie at residues 148–155 (CHTCDGEG), 165–172 (CHYCNGSG), 191–198 (CPVCSGSG), and 205–212 (CPTCHGKG).

Belongs to the DnaJ family. In terms of assembly, homodimer. Zn(2+) serves as cofactor.

It localises to the cytoplasm. Its function is as follows. Participates actively in the response to hyperosmotic and heat shock by preventing the aggregation of stress-denatured proteins and by disaggregating proteins, also in an autonomous, DnaK-independent fashion. Unfolded proteins bind initially to DnaJ; upon interaction with the DnaJ-bound protein, DnaK hydrolyzes its bound ATP, resulting in the formation of a stable complex. GrpE releases ADP from DnaK; ATP binding to DnaK triggers the release of the substrate protein, thus completing the reaction cycle. Several rounds of ATP-dependent interactions between DnaJ, DnaK and GrpE are required for fully efficient folding. Also involved, together with DnaK and GrpE, in the DNA replication of plasmids through activation of initiation proteins. In Staphylococcus saprophyticus subsp. saprophyticus (strain ATCC 15305 / DSM 20229 / NCIMB 8711 / NCTC 7292 / S-41), this protein is Chaperone protein DnaJ.